Reading from the N-terminus, the 648-residue chain is Biosynthetic arginine decarboxylase (648 aa).

Lysine 109 is subject to N6-(pyridoxal phosphate)lysine. Position 291–301 (291–301) interacts with substrate; sequence IDVGGGLGIDF.

This sequence belongs to the Orn/Lys/Arg decarboxylase class-II family. SpeA subfamily. It depends on Mg(2+) as a cofactor. Pyridoxal 5'-phosphate is required as a cofactor.

It carries out the reaction L-arginine + H(+) = agmatine + CO2. The protein operates within amine and polyamine biosynthesis; agmatine biosynthesis; agmatine from L-arginine: step 1/1. Functionally, catalyzes the biosynthesis of agmatine from arginine. The protein is Biosynthetic arginine decarboxylase of Prochlorococcus marinus (strain MIT 9312).